We begin with the raw amino-acid sequence, 319 residues long: MNTNKIGVLLANLGTPDEPTTPAVKRYLKQFLSDPRVIDLPKFKWQFILNYMILPKRSPKVAKLYREIWTEQGSPLLAISRQQQQALQDYFNRQNQNVLVELGMSYGNPSIESATDRLIKAGVSKIIVLPLYPQYSSTTTASVLDAFARGLTQQRNIVPFEFIHSYHNDPLYIQALANTIRLADDEKLLFSFHGIPKRYQTEGDFYPEHCQKTAQLVADKLSLSNEQWLVTYQSRFGDEEWLQPYTDETLEKLPSQGVKKIAVICAGFSADCLETLEEIAEENKENFLNAGGQSYRYIPALNANTDHINALAKLIEAKI.

Fe cation is bound by residues H193 and E274.

The protein belongs to the ferrochelatase family.

The protein resides in the cytoplasm. The catalysed reaction is heme b + 2 H(+) = protoporphyrin IX + Fe(2+). It functions in the pathway porphyrin-containing compound metabolism; protoheme biosynthesis; protoheme from protoporphyrin-IX: step 1/1. Its function is as follows. Catalyzes the ferrous insertion into protoporphyrin IX. In Actinobacillus pleuropneumoniae serotype 5b (strain L20), this protein is Ferrochelatase.